Here is an 88-residue protein sequence, read N- to C-terminus: Small ribosomal subunit protein bS16 (88 aa).

The protein belongs to the bacterial ribosomal protein bS16 family.

This Thermus aquaticus protein is Small ribosomal subunit protein bS16.